Reading from the N-terminus, the 237-residue chain is Cysteine-rich venom protein ENH2 (237 aa).

The N-terminal stretch at 1–18 (MIVFILLSLAAVLQQFVA) is a signal peptide. The 129-residue stretch at 37–165 (VDMHNSFRRS…PYNYFYVCQY (129 aa)) folds into the SCP domain. 7 disulfide bridges follow: C74–C152, C91–C166, C147–C163, C185–C192, C188–C197, C210–C228, and C219–C232. The 37-residue stretch at 201 to 237 (CPITNTFTNCDSLLQQNSCEDSYIKTNCGASCFGQDK) folds into the ShKT domain.

It belongs to the CRISP family. In terms of tissue distribution, expressed by the venom gland.

The protein resides in the secreted. In terms of biological role, blocks contraction of smooth muscle elicited by high potassium-induced depolarization, but does not block caffeine-stimulated contraction. May target voltage-gated calcium channels on smooth muscle. This is Cysteine-rich venom protein ENH2 from Pseudoferania polylepis (Macleay's water snake).